Consider the following 359-residue polypeptide: Guanine nucleotide-binding protein-like alpha-11 subunit (359 aa).

Residue Gly2 is the site of N-myristoyl glycine attachment. A G-alpha domain is found at 29–359; it reads KLIKILMMGN…YVKKILEDTI (331 aa). Residues 32-45 are G1 motif; the sequence is KILMMGNENSAKST. Ser44 lines the Mg(2+) pocket. The tract at residues 176-185 is G2 motif; that stretch reads DIIRCSKNNQ. Residues 178 to 185, 204 to 208, and 281 to 284 each bind GTP; these read IRCSKNNQ, DTGNQ, and NKKE. A G3 motif region spans residues 200–209; it reads FVFVDTGNQK. The G4 motif stretch occupies residues 277-284; sequence IVLFNKKE. The G5 motif stretch occupies residues 337–342; it reads FNSSDT.

It belongs to the G-alpha family.

In Dictyostelium discoideum (Social amoeba), this protein is Guanine nucleotide-binding protein-like alpha-11 subunit (gpaK).